We begin with the raw amino-acid sequence, 542 residues long: Valine N-monooxygenase 1 (542 aa).

The Cytoplasmic segment spans residues 1–21 (MAMNVSTTIGLLNATSFASSS). The helical; Signal-anchor for type II membrane protein transmembrane segment at 22–42 (SINTVKILFVTLFISIVSTIV) threads the bilayer. Residues 43-542 (KLQKSAANKE…LAPHLYPTSP (500 aa)) are Lumenal-facing. Asparagine 278 is a glycosylation site (N-linked (GlcNAc...) asparagine). Position 478 (cysteine 478) interacts with heme. Asparagine 506 is a glycosylation site (N-linked (GlcNAc...) asparagine).

The protein belongs to the cytochrome P450 family. Heme is required as a cofactor. Expressed in the epidermis, the next two cortex cell layers, the endodermis and the pericycle of leaf petioles. Strong expression around the laticifers among the phloem cells and in parenchymatic cells between the protoxylem and the metaxylem cells. In the leaves, preferentially expressed in the mesophyll cells adjacent to the epidermis.

It localises to the microsome membrane. The enzyme catalyses L-valine + 2 reduced [NADPH--hemoprotein reductase] + 2 O2 = (E)-2-methylpropanal oxime + 2 oxidized [NADPH--hemoprotein reductase] + CO2 + 3 H2O + 2 H(+). The catalysed reaction is L-valine + reduced [NADPH--hemoprotein reductase] + O2 = N-hydroxy-L-valine + oxidized [NADPH--hemoprotein reductase] + H2O + 2 H(+). It carries out the reaction N-hydroxy-L-valine + reduced [NADPH--hemoprotein reductase] + O2 = N,N-dihydroxy-L-valine + oxidized [NADPH--hemoprotein reductase] + H2O + H(+). It catalyses the reaction L-isoleucine + 2 reduced [NADPH--hemoprotein reductase] + 2 O2 = (1E,2S)-2-methylbutanal oxime + 2 oxidized [NADPH--hemoprotein reductase] + CO2 + 3 H2O + 2 H(+). The enzyme catalyses L-isoleucine + reduced [NADPH--hemoprotein reductase] + O2 = N-hydroxy-L-isoleucine + oxidized [NADPH--hemoprotein reductase] + H2O + 2 H(+). The catalysed reaction is N-hydroxy-L-isoleucine + reduced [NADPH--hemoprotein reductase] + O2 = N,N-dihydroxy-L-isoleucine + oxidized [NADPH--hemoprotein reductase] + H2O + H(+). The protein operates within secondary metabolite biosynthesis. Its activity is regulated as follows. Inhibited by tetcyclasis but not by 1-aminobenzotriazole (ABT). Involved in the biosynthesis of the cyanogenic glucosides linamarin and lotaustralin. Can use L-valine or L-isoleucine as substrate, but not L-leucine, L-phenylalanine, L-tyrosine, D-valine or D-isoleucine. Catalyzes multi-step reactions starting with two successive N-hydroxylations using L-valine and L-isoleucine as substrates leading to the formation of N,N-dihydroxy-L-valine and N,N-dihydroxy-L-isoleucine, respectively; following spontaneous reactions lead to the production of (E)-2-methylpropanal oxime and (1E,2S)-2-methylbutanal oxime, respectively. This Manihot esculenta (Cassava) protein is Valine N-monooxygenase 1.